The chain runs to 385 residues: 6-hydroxynicotinate 3-monooxygenase (385 aa).

The first 20 residues, 1–20, serve as a signal peptide directing secretion; that stretch reads MSQSPRIAVVGAGLGGAAAA. Residues G15, 34–35, H47, R108, and L130 each bind FAD; that span reads EQ. The Proton acceptor role is filled by H47. Residue Y215 is the Proton acceptor of the active site. FAD contacts are provided by residues D294 and 307 to 308; that span reads AA.

The protein belongs to the 6-hydroxynicotinate 3-monooxygenase family. As to quaternary structure, monomer. FAD serves as cofactor.

It catalyses the reaction 6-hydroxynicotinate + NADH + O2 + 2 H(+) = 2,5-dihydroxypyridine + CO2 + NAD(+) + H2O. Inhibited competitively by nicotinic acid with a Ki of 0.49 mM. Inhibited by thiol-specific compounds p-chloromercuribenzoate, DTNB, Ag(2)SO(4), HgCl(2), CuCl(2) and N-ethylmaleimide. No inhibition by o-phenanthroline, 8-hydroxyquinoline, EDTA, disodium 4,5-dihydroxy-m-benzenedisulfonate, fluoride, azide, KCl, LiCl, NaCl, BaCl(2), MnCl(2), MgCl(2), PBCl, ZnCl(2), CoCl(2), SnCl(2), FeSO(4), FeCl(3), NiCl(2), CdCl(2), AlCl(3), iodoacetic acid, hydro-xylamine, phenylhydrazine, semicarbazide, cysteamine, alpha,alpha-dipyridyl and urea. Functionally, flavin-dependent monooxygenase (FMO) that catalyzes the decarboxylative hydroxylation of 6-hydroxynicotinic acid (6-HNA) to 2,5-dihydroxypyridine (2,5-DHP) with concomitant oxidation of NADH, a step in the aerobic nicotinate degradation pathway. Uses NADH in preference to NADPH as an electron donor. In Pseudomonas fluorescens, this protein is 6-hydroxynicotinate 3-monooxygenase (nicC).